We begin with the raw amino-acid sequence, 567 residues long: Proline--tRNA ligase (567 aa).

This sequence belongs to the class-II aminoacyl-tRNA synthetase family. ProS type 1 subfamily. Homodimer.

It localises to the cytoplasm. The enzyme catalyses tRNA(Pro) + L-proline + ATP = L-prolyl-tRNA(Pro) + AMP + diphosphate. Its function is as follows. Catalyzes the attachment of proline to tRNA(Pro) in a two-step reaction: proline is first activated by ATP to form Pro-AMP and then transferred to the acceptor end of tRNA(Pro). As ProRS can inadvertently accommodate and process non-cognate amino acids such as alanine and cysteine, to avoid such errors it has two additional distinct editing activities against alanine. One activity is designated as 'pretransfer' editing and involves the tRNA(Pro)-independent hydrolysis of activated Ala-AMP. The other activity is designated 'posttransfer' editing and involves deacylation of mischarged Ala-tRNA(Pro). The misacylated Cys-tRNA(Pro) is not edited by ProRS. The chain is Proline--tRNA ligase from Staphylococcus aureus (strain MRSA252).